A 51-amino-acid polypeptide reads, in one-letter code: Ovomucoid (51 aa).

In terms of domain architecture, Kazal-like spans V3–C51. Disulfide bonds link C5–C35, C13–C32, and C21–C51. An N-linked (GlcNAc...) asparagine glycan is attached at N42.

The protein localises to the secreted. In Nothoprocta cinerascens (Brushland tinamou), this protein is Ovomucoid.